A 157-amino-acid polypeptide reads, in one-letter code: Cyclic pyranopterin monophosphate synthase (157 aa).

Substrate-binding positions include 75-77 (LCH) and 111-112 (ME). The active site involves Asp126.

This sequence belongs to the MoaC family. As to quaternary structure, homohexamer; trimer of dimers.

The catalysed reaction is (8S)-3',8-cyclo-7,8-dihydroguanosine 5'-triphosphate = cyclic pyranopterin phosphate + diphosphate. It functions in the pathway cofactor biosynthesis; molybdopterin biosynthesis. In terms of biological role, catalyzes the conversion of (8S)-3',8-cyclo-7,8-dihydroguanosine 5'-triphosphate to cyclic pyranopterin monophosphate (cPMP). This chain is Cyclic pyranopterin monophosphate synthase, found in Novosphingobium aromaticivorans (strain ATCC 700278 / DSM 12444 / CCUG 56034 / CIP 105152 / NBRC 16084 / F199).